The chain runs to 353 residues: Probable arabinan endo-1,5-alpha-L-arabinosidase B (353 aa).

A signal peptide spans 1–16 (MVLVATLFSLFTVSLC). D39 acts as the Proton acceptor in catalysis. N-linked (GlcNAc...) asparagine glycosylation occurs at N194. A disordered region spans residues 202-227 (HLAKHPKTERVNSQDQNPDPLCRDSS). The Proton donor role is filled by E233.

The protein belongs to the glycosyl hydrolase 43 family.

Its subcellular location is the secreted. It carries out the reaction Endohydrolysis of (1-&gt;5)-alpha-arabinofuranosidic linkages in (1-&gt;5)-arabinans.. The protein operates within glycan metabolism; L-arabinan degradation. Endo-1,5-alpha-L-arabinanase involved in degradation of pectin. Its preferred substrate is linear 1,5-alpha-L-arabinan. This chain is Probable arabinan endo-1,5-alpha-L-arabinosidase B (abnB), found in Aspergillus oryzae (strain ATCC 42149 / RIB 40) (Yellow koji mold).